We begin with the raw amino-acid sequence, 509 residues long: MNYLVGLVLIFTIFYFFLQKNDKNMNSKIPGPKGIPILGNLLSMKGDLHLKLQEWYKQYGVIYRIKMGNVETVVLTEYPIIREAFIGNSNSFVNRFQRKSRLKLNNGENLVIVNGDIHNKLKTLVLSEMTNQRIKKYETSFIDNEIKKLFKVLDEHADTGKPIILNNHIKMFSMNIVLCFTFGLNYSYPYDEFEKASEFIKLMVEFFNIAGQPIISDFIPSLEPFIDTSNYLNTYKRIFNYTSDLITKFKNENEIHNNINDNNKSLADKPILSKLLQSFENGEISWDSVVSTCIDLQTAGADTSANTILYCLLELINNPNIQSKVYDDIKQAIIQSKENENQNDNENQEQTEEIITLSFNKYRTLAPYLSMVVKETFRKYPSGTIGLPHVTSEDVELNGYKICAGTQIIQNIWATHRNEKQFSEPDSFIPERFISQQQSANSNLIHFGCGVRDCIGKSLADSEIFTMLASLINRYEFTNPNPSTPLNEIGKFGITYSCPENKIIIKKRF.

The chain crosses the membrane as a helical span at residues 2–19 (NYLVGLVLIFTIFYFFLQ). Cysteine 454 contacts heme.

This sequence belongs to the cytochrome P450 family. It depends on heme as a cofactor.

Its subcellular location is the membrane. The polypeptide is Probable cytochrome P450 513A1 (cyp513A1) (Dictyostelium discoideum (Social amoeba)).